The sequence spans 88 residues: UPF0213 protein EF_2693 (88 aa).

The GIY-YIG domain occupies 5–82; it reads KSHYFYVLLC…KKLTRKQKEQ (78 aa).

The protein belongs to the UPF0213 family.

The protein is UPF0213 protein EF_2693 of Enterococcus faecalis (strain ATCC 700802 / V583).